The following is a 367-amino-acid chain: 4-hydroxy-3-methylbut-2-en-1-yl diphosphate synthase (flavodoxin) (367 aa).

The [4Fe-4S] cluster site is built by Cys-265, Cys-268, Cys-300, and Glu-307.

Belongs to the IspG family. Requires [4Fe-4S] cluster as cofactor.

The enzyme catalyses (2E)-4-hydroxy-3-methylbut-2-enyl diphosphate + oxidized [flavodoxin] + H2O + 2 H(+) = 2-C-methyl-D-erythritol 2,4-cyclic diphosphate + reduced [flavodoxin]. The protein operates within isoprenoid biosynthesis; isopentenyl diphosphate biosynthesis via DXP pathway; isopentenyl diphosphate from 1-deoxy-D-xylulose 5-phosphate: step 5/6. Functionally, converts 2C-methyl-D-erythritol 2,4-cyclodiphosphate (ME-2,4cPP) into 1-hydroxy-2-methyl-2-(E)-butenyl 4-diphosphate. This Bacillus anthracis protein is 4-hydroxy-3-methylbut-2-en-1-yl diphosphate synthase (flavodoxin).